Here is a 230-residue protein sequence, read N- to C-terminus: MKSLNTLVILTSVISTSVFAGAYVENREAYNLASDQMEFMLRVGYNSDMGAGIMLTNTYTLQRDDELKHGYNEIEGWYPLFKPTDKLTIQPGGLINDKSIGSGGAVYLDVNYKFTPWFNLTVRNRYNHNNYSSTDLNGELDNNDSYEIGNYWNFIITDKFSYTFEPHYFYNVNDFNSSNGTKHHWEITNTFRYRINEHWLPYFELRWLDRNVGPYHREQNQIRIGAKYFF.

The signal sequence occupies residues 1-20; the sequence is MKSLNTLVILTSVISTSVFA.

It belongs to the oligogalacturonate-specific porin KdgM (TC 1.B.35) family. OmpL subfamily.

It localises to the cell outer membrane. Functionally, outer membrane channel protein that allows an efficient diffusion of low-molecular-weight solutes such as small sugars and tetraglycine. However, the specific substrate recognized by the OmpL channel is unknown. In Salmonella typhimurium (strain LT2 / SGSC1412 / ATCC 700720), this protein is Porin OmpL (ompL).